Reading from the N-terminus, the 189-residue chain is Peptide deformylase (189 aa).

Residues cysteine 116 and histidine 159 each contribute to the Fe cation site. Glutamate 160 is an active-site residue. Histidine 163 contributes to the Fe cation binding site.

The protein belongs to the polypeptide deformylase family. Fe(2+) serves as cofactor.

The enzyme catalyses N-terminal N-formyl-L-methionyl-[peptide] + H2O = N-terminal L-methionyl-[peptide] + formate. Functionally, removes the formyl group from the N-terminal Met of newly synthesized proteins. Requires at least a dipeptide for an efficient rate of reaction. N-terminal L-methionine is a prerequisite for activity but the enzyme has broad specificity at other positions. The protein is Peptide deformylase of Limosilactobacillus fermentum (strain NBRC 3956 / LMG 18251) (Lactobacillus fermentum).